We begin with the raw amino-acid sequence, 166 residues long: NAD(P)H-quinone oxidoreductase subunit I, chloroplastic (166 aa).

2 consecutive 4Fe-4S ferredoxin-type domains span residues 55 to 84 (GRIHFEFDKCIACEVCVRVCPIDLPVVDWK) and 95 to 124 (LNYSIDFGICIFCGNCVEYCPTNCLSMTEE). The [4Fe-4S] cluster site is built by C64, C67, C70, C74, C104, C107, C110, and C114.

It belongs to the complex I 23 kDa subunit family. As to quaternary structure, NDH is composed of at least 16 different subunits, 5 of which are encoded in the nucleus. It depends on [4Fe-4S] cluster as a cofactor.

The protein localises to the plastid. The protein resides in the chloroplast thylakoid membrane. It carries out the reaction a plastoquinone + NADH + (n+1) H(+)(in) = a plastoquinol + NAD(+) + n H(+)(out). It catalyses the reaction a plastoquinone + NADPH + (n+1) H(+)(in) = a plastoquinol + NADP(+) + n H(+)(out). Its function is as follows. NDH shuttles electrons from NAD(P)H:plastoquinone, via FMN and iron-sulfur (Fe-S) centers, to quinones in the photosynthetic chain and possibly in a chloroplast respiratory chain. The immediate electron acceptor for the enzyme in this species is believed to be plastoquinone. Couples the redox reaction to proton translocation, and thus conserves the redox energy in a proton gradient. The sequence is that of NAD(P)H-quinone oxidoreductase subunit I, chloroplastic from Parthenium hysterophorus (Santa Maria feverfew).